A 294-amino-acid polypeptide reads, in one-letter code: MAAVVEKQEAVAEFYDNSTGAWEELFGEHLHDGYYEPGTTATIPAHRAAVVRMIDEALRFAGVSTDDPAKKPRNLLDVGCGLGGTCLYLAKKYDIKCTGITISPEQVKCAEDLAAAQGLENKVSFDVGDALDMPYQDGEFDVVFTLQCIDHVQDKEKFIREMVRVGSPGAAIVVITYTHRDLSPTEQSLKPHEIKTLKKICDNIVLSSISSTHDYVNWMTSLSLKDIKTADWTQNIIPFYPLLFKVSFSMKGFISLLMKGGWSAIKVVLAVKMMSKAIDDGLLYYTAVSGRKPN.

The tract at residues 75 to 84 (LLDVGCGLGG) is SAM motif I. The short motif at 137–143 (DGEFDVV) is the Vacuolar targeting signal element. The tract at residues 138–146 (GEFDVVFTL) is SAM motif II. Residues 165 to 174 (VGSPGAAIVV) form an SAM motif III region.

Belongs to the class I-like SAM-binding methyltransferase superfamily. gTMT family. As to quaternary structure, homodimer.

The protein resides in the vacuole membrane. It carries out the reaction picrinine + S-adenosyl-L-methionine = ervincine + S-adenosyl-L-homocysteine + H(+). It participates in alkaloid biosynthesis; vindoline biosynthesis. Functionally, S-adenosyl-L-methionine-dependent N-methyltransferase involved in the biosynthesis of biologically active monoterpenoid indole alkaloids (MIAs) natural products including vindoline. Catalyzes the conversion of picrinine to N-methylpicrinine (ervincine). The sequence is that of Picrinine-N-methytransferase TMT2 from Catharanthus roseus (Madagascar periwinkle).